We begin with the raw amino-acid sequence, 183 residues long: Proton-transporting V-type ATPase complex assembly regulator TMEM9 (183 aa).

An N-terminal signal peptide occupies residues 1-20; the sequence is MKLLCLVAVVGCLLVPPAQA. Residues Asn-21, Asn-38, and Asn-47 are each glycosylated (N-linked (GlcNAc...) asparagine). Residues 21-89 lie on the Extracellular side of the membrane; it reads NKSSEDIRCK…YEERSTTTIK (69 aa). The helical transmembrane segment at 90-110 threads the bilayer; it reads VIIVIYLSVVGALLLYMAFLM. Residues 111–183 are Cytoplasmic-facing; the sequence is LVDPLIRKPD…TVFDRHKMLS (73 aa). Ser-144 is modified (phosphoserine).

The protein belongs to the TMEM9 family. As to quaternary structure, interacts with the v-ATPase accessory protein ATP6AP2 and with the v-ATPase complex subunit ATP6V0D1; these interactions lead to the assembly of the v-ATPase complex. N-glycosylated. As to expression, expressed in heart, lung, kidney, liver and intestines. Enriched in the hepatocytes around the central vein.

It is found in the lysosome membrane. The protein resides in the late endosome membrane. The protein localises to the endosome. It localises to the multivesicular body membrane. Functionally, transmembrane protein that binds to and facilitates the assembly of lysosomal proton-transporting V-type ATPase (v-ATPase), resulting in enhanced lysosomal acidification and trafficking. By bringing the v-ATPase accessory protein ATP6AP2 and the v-ATPase subunit ATP6V0D1 together, allows v-ATPase complex formation and activation. TMEM9-controlled vesicular acidification induces hyperactivation of Wnt/beta-catenin signaling, involved in development, tissue homeostasis and tissue regeneration, through lysosomal degradation of adenomatous polyposis coli/APC. In the liver, involved in hepatic regeneration. The sequence is that of Proton-transporting V-type ATPase complex assembly regulator TMEM9 from Mus musculus (Mouse).